We begin with the raw amino-acid sequence, 542 residues long: MTSIINQRWPLGNLMDGFPNGEKQNKLSFGGVPEKGYFEEFNKDPKYISFSGTPEKAYFEEFNRYRNIDEDDNRDTFPLFNEISSNPESESYLQTFVDNVRINTDINFVSKTNSFSQNDLSYLNATYVDKSLSLELPIKFNWAKTTSADSPDVVAKKKLISKPDNQYLCGSCWAVSVAGVVGDVFAVAGLVNWVPNISATYALIHYPQGRCKGGDPATLLYNIANNGIPSKHCVDYSWCSQNRTCTTADSAAHFGSDLSPLIPKDRGCYFDSEHYIFKIDSNIRTIVAGSGAIDVSNVQRTIKEYIYTTGPAVGGYIIFRNFTSKVPFGPHKGNSTFNVINGGVYLEKANYAQYRGEYGEHITEGLTFSSSNTDSDNYAGGHAISIMGWGIQPRIRVGNGPNDIADVPYWYCRNSWGTKWGMNGGYFKIAMYPYNRKSQFSKIVELMTPQGQHIRLGGVLAFTVSNPPVLKKLPANKQPPNPNSLSKLLDYYKNDEDDIVTKLPNIVPPSDGKKSTTSKTNNWYIYALIIIFILIIFFVLRK.

Active-site residues include cysteine 172, histidine 382, and asparagine 414. Residues 520 to 540 form a helical membrane-spanning segment; the sequence is TNNWYIYALIIIFILIIFFVL.

It belongs to the peptidase C1 family.

It is found in the membrane. In terms of biological role, probable cysteine protease. This is Probable cysteine proteinase 361L from Acheta domesticus (House cricket).